The following is a 331-amino-acid chain: Probable allantoicase (331 aa).

Belongs to the allantoicase family.

It catalyses the reaction allantoate + H2O = (S)-ureidoglycolate + urea. It functions in the pathway nitrogen metabolism; (S)-allantoin degradation; (S)-ureidoglycolate from allantoate (aminidohydrolase route): step 1/1. The sequence is that of Probable allantoicase from Pseudomonas syringae pv. syringae (strain B728a).